Consider the following 200-residue polypeptide: Superoxide dismutase [Mn] 1 (200 aa).

Mn(2+)-binding residues include His-29, His-76, Asp-158, and His-162.

It belongs to the iron/manganese superoxide dismutase family. In terms of assembly, homodimer or homotetramer. It depends on Mn(2+) as a cofactor.

It carries out the reaction 2 superoxide + 2 H(+) = H2O2 + O2. Inhibited by hydrogen peroxide. Is resistant to cyanide and azide inhibition. In terms of biological role, destroys superoxide anion radicals which are normally produced within the cells and which are toxic to biological systems. The protein is Superoxide dismutase [Mn] 1 (sod1) of Halobacterium salinarum (strain ATCC 700922 / JCM 11081 / NRC-1) (Halobacterium halobium).